The sequence spans 219 residues: Poxin (219 aa).

The active-site Proton donor is the His-17. Tyr-138 functions as the Shared with catalytic histidine of dimeric partner in the catalytic mechanism. Lys-142 functions as the Proton acceptor; shared with catalytic histidine of dimeric partner in the catalytic mechanism.

This sequence belongs to the poxin family. As to quaternary structure, homodimer.

The enzyme catalyses 2',3'-cGAMP + H2O = Gp(2'-5')Ap(3') + H(+). Functionally, nuclease that is responsible for viral evasion of host cGAS-STING innate immunity. Cleaves 2',3'-cGAMP which is produced by host cGAS following recognition of cytosolic DNA and blocks the subsequent 2',3'-cGAMP-mediated activation of TMEM173/STING, which normally spreads to adjacent cells and activates the interferon and NF-kappa-B immune responses. In Bos taurus (Bovine), this protein is Poxin (OPG188).